Reading from the N-terminus, the 400-residue chain is S-adenosylmethionine synthase (400 aa).

137–142 (GEGSGD) is an ATP binding site.

The protein belongs to the AdoMet synthase 2 family. Mg(2+) serves as cofactor.

It carries out the reaction L-methionine + ATP + H2O = S-adenosyl-L-methionine + phosphate + diphosphate. It participates in amino-acid biosynthesis; S-adenosyl-L-methionine biosynthesis; S-adenosyl-L-methionine from L-methionine: step 1/1. Its function is as follows. Catalyzes the formation of S-adenosylmethionine from methionine and ATP. The sequence is that of S-adenosylmethionine synthase from Haloarcula marismortui (strain ATCC 43049 / DSM 3752 / JCM 8966 / VKM B-1809) (Halobacterium marismortui).